The following is a 920-amino-acid chain: Phosphoenolpyruvate carboxylase (920 aa).

Catalysis depends on residues His138 and Lys583.

Belongs to the PEPCase type 1 family. It depends on Mg(2+) as a cofactor.

It carries out the reaction oxaloacetate + phosphate = phosphoenolpyruvate + hydrogencarbonate. Forms oxaloacetate, a four-carbon dicarboxylic acid source for the tricarboxylic acid cycle. In Streptococcus pyogenes serotype M5 (strain Manfredo), this protein is Phosphoenolpyruvate carboxylase.